The primary structure comprises 286 residues: Phosphatidylserine decarboxylase proenzyme (286 aa).

Residues Asp-90, His-147, and Ser-252 each act as charge relay system; for autoendoproteolytic cleavage activity in the active site. Ser-252 serves as the catalytic Schiff-base intermediate with substrate; via pyruvic acid; for decarboxylase activity. Ser-252 carries the post-translational modification Pyruvic acid (Ser); by autocatalysis.

It belongs to the phosphatidylserine decarboxylase family. PSD-B subfamily. Prokaryotic type I sub-subfamily. Heterodimer of a large membrane-associated beta subunit and a small pyruvoyl-containing alpha subunit. Pyruvate serves as cofactor. In terms of processing, is synthesized initially as an inactive proenzyme. Formation of the active enzyme involves a self-maturation process in which the active site pyruvoyl group is generated from an internal serine residue via an autocatalytic post-translational modification. Two non-identical subunits are generated from the proenzyme in this reaction, and the pyruvate is formed at the N-terminus of the alpha chain, which is derived from the carboxyl end of the proenzyme. The autoendoproteolytic cleavage occurs by a canonical serine protease mechanism, in which the side chain hydroxyl group of the serine supplies its oxygen atom to form the C-terminus of the beta chain, while the remainder of the serine residue undergoes an oxidative deamination to produce ammonia and the pyruvoyl prosthetic group on the alpha chain. During this reaction, the Ser that is part of the protease active site of the proenzyme becomes the pyruvoyl prosthetic group, which constitutes an essential element of the active site of the mature decarboxylase.

Its subcellular location is the cell membrane. The catalysed reaction is a 1,2-diacyl-sn-glycero-3-phospho-L-serine + H(+) = a 1,2-diacyl-sn-glycero-3-phosphoethanolamine + CO2. It functions in the pathway phospholipid metabolism; phosphatidylethanolamine biosynthesis; phosphatidylethanolamine from CDP-diacylglycerol: step 2/2. In terms of biological role, catalyzes the formation of phosphatidylethanolamine (PtdEtn) from phosphatidylserine (PtdSer). The protein is Phosphatidylserine decarboxylase proenzyme of Ectopseudomonas mendocina (strain ymp) (Pseudomonas mendocina).